A 621-amino-acid chain; its full sequence is Very-long-chain aldehyde decarbonylase GL1-5 (621 aa).

Transmembrane regions (helical) follow at residues isoleucine 99–leucine 119, glycine 126–histidine 146, leucine 186–phenylalanine 206, phenylalanine 224–threonine 244, and methionine 332–valine 352. In terms of domain architecture, Fatty acid hydroxylase spans valine 138 to threonine 272.

The protein belongs to the sterol desaturase family. In terms of assembly, homodimer. In terms of tissue distribution, expressed in panicles, developing spikelets, stamens and hulls and, at low levels, in roots, developing seeds, flag leaves and seedling shoots. Strongly expressed in the epidermal cells of anthers.

It localises to the endoplasmic reticulum membrane. It catalyses the reaction a long-chain fatty aldehyde + 2 NADPH + O2 + H(+) = a long-chain alkane + formate + 2 NADP(+) + H2O. Functionally, aldehyde decarbonylase involved in the conversion of aldehydes to alkanes. Core component of a very-long-chain alkane synthesis complex. Required for the biosynthesis of very-long-chain fatty acids (including polyesters) in cuticles, anther tapetum and pollen exine. In Oryza sativa subsp. japonica (Rice), this protein is Very-long-chain aldehyde decarbonylase GL1-5.